The chain runs to 118 residues: Putative pterin-4-alpha-carbinolamine dehydratase (118 aa).

This sequence belongs to the pterin-4-alpha-carbinolamine dehydratase family.

The enzyme catalyses (4aS,6R)-4a-hydroxy-L-erythro-5,6,7,8-tetrahydrobiopterin = (6R)-L-erythro-6,7-dihydrobiopterin + H2O. This Pseudomonas putida (strain GB-1) protein is Putative pterin-4-alpha-carbinolamine dehydratase.